Reading from the N-terminus, the 207-residue chain is Superoxide dismutase [Mn] (207 aa).

The Mn(2+) site is built by His-28, His-76, Asp-160, and His-164.

Belongs to the iron/manganese superoxide dismutase family. Mn(2+) serves as cofactor.

The protein localises to the secreted. It catalyses the reaction 2 superoxide + 2 H(+) = H2O2 + O2. Functionally, destroys superoxide anion radicals which are normally produced within the cells and which are toxic to biological systems. This Mycolicibacterium paratuberculosis (strain ATCC BAA-968 / K-10) (Mycobacterium paratuberculosis) protein is Superoxide dismutase [Mn] (sodA).